A 351-amino-acid chain; its full sequence is Homeobox-leucine zipper protein HOX23 (351 aa).

Residues 34-128 (LQDHAHGGHG…SFESGNKLEP (95 aa)) form a disordered region. Residues 56–65 (SPFLPDLAMD) show a composition bias toward low complexity. Residues 101–160 (GGEKKRRLSVEQVRTLERSFESGNKLEPERKAQLARALGLQPRQVAIWFQNRRARWKTKQ) constitute a DNA-binding region (homeobox). Residues 114–128 (RTLERSFESGNKLEP) are compositionally biased toward basic and acidic residues. The tract at residues 159–203 (KQLEKDFDALRRQLDAARAENDALLSLNSKLHAEIVALKGGAAAA) is leucine-zipper. Residues 227–263 (EASCSNRSENSSEINLDISRPAPPPPPPPANESPVNR) are disordered. Positions 228 to 240 (ASCSNRSENSSEI) are enriched in polar residues. A compositionally biased stretch (pro residues) spans 247–257 (PAPPPPPPPAN).

The protein belongs to the HD-ZIP homeobox family. Class I subfamily. As to expression, expressed in seedlings, roots, stems, leaf sheaths and panicles.

It is found in the nucleus. Functionally, probable transcription factor. The chain is Homeobox-leucine zipper protein HOX23 (HOX23) from Oryza sativa subsp. indica (Rice).